A 270-amino-acid chain; its full sequence is Hematopoietically-expressed homeobox protein HHEX (270 aa).

The tract at residues M1 to R137 is interaction with SOX13. S53 bears the Phosphoserine mark. Residues R137–K196 constitute a DNA-binding region (homeobox). A required for WNT signaling induction region spans residues R137–G270. Residues R194–G270 are disordered. Positions P222–A241 are enriched in polar residues. Positions E244–I260 are enriched in acidic residues.

Interacts with CD81; the interaction prevents nuclear translocation of HHEX. Interacts (via N-terminus) with SOX13; abolishes the SOX13-mediated inhibition of WNT-mediated transcriptional activity via competitive inhibition of the SOX13-TCF7 complex. Interacts with EIF4E; the interaction inhibits EIF4E-mediated mRNA nuclear export. In terms of tissue distribution, liver and promyelocytic leukemia cell line HL-60.

It is found in the nucleus. Its subcellular location is the nuclear body. It localises to the cytoplasm. Functionally, recognizes the DNA sequence 5'-ATTAA-3'. Transcriptional repressor. Activator of WNT-mediated transcription in conjunction with CTNNB1. Establishes anterior identity at two levels; acts early to enhance canonical WNT-signaling by repressing expression of TLE4, and acts later to inhibit NODAL-signaling by directly targeting NODAL. Inhibits EIF4E-mediated mRNA nuclear export. May play a role in hematopoietic differentiation. This Homo sapiens (Human) protein is Hematopoietically-expressed homeobox protein HHEX (HHEX).